Here is a 359-residue protein sequence, read N- to C-terminus: 5-amino-6-(D-ribitylamino)uracil--L-tyrosine 4-hydroxyphenyl transferase (359 aa).

The region spanning 45–282 (VTYVVNANIN…TYAVSRIFFK (238 aa)) is the Radical SAM core domain. The [4Fe-4S] cluster site is built by Cys-59, Cys-63, and Cys-66.

It belongs to the radical SAM superfamily. CofH family. In terms of assembly, consists of two subunits, CofG and CofH. Requires [4Fe-4S] cluster as cofactor.

It catalyses the reaction 5-amino-6-(D-ribitylamino)uracil + L-tyrosine + S-adenosyl-L-methionine = 5-amino-5-(4-hydroxybenzyl)-6-(D-ribitylimino)-5,6-dihydrouracil + 2-iminoacetate + 5'-deoxyadenosine + L-methionine + H(+). It functions in the pathway cofactor biosynthesis; coenzyme F0 biosynthesis. Catalyzes the radical-mediated synthesis of 5-amino-5-(4-hydroxybenzyl)-6-(D-ribitylimino)-5,6-dihydrouracil from 5-amino-6-(D-ribitylamino)uracil and L-tyrosine. The sequence is that of 5-amino-6-(D-ribitylamino)uracil--L-tyrosine 4-hydroxyphenyl transferase from Methanococcus maripaludis (strain C6 / ATCC BAA-1332).